Consider the following 152-residue polypeptide: Acidic phospholipase A2 S17-58 (152 aa).

A signal peptide spans methionine 1 to alanine 19. Positions serine 20–leucine 27 are excised as a propeptide. Cystine bridges form between cysteine 38–cysteine 104, cysteine 54–cysteine 151, cysteine 56–cysteine 72, cysteine 71–cysteine 132, cysteine 78–cysteine 125, cysteine 88–cysteine 118, and cysteine 111–cysteine 123. Residues tyrosine 55, glycine 57, and glycine 59 each contribute to the Ca(2+) site. Histidine 75 is an active-site residue. Aspartate 76 lines the Ca(2+) pocket. Residue aspartate 126 is part of the active site.

This sequence belongs to the phospholipase A2 family. Group I subfamily. D49 sub-subfamily. Ca(2+) is required as a cofactor. As to expression, expressed by the venom gland.

The protein localises to the secreted. The catalysed reaction is a 1,2-diacyl-sn-glycero-3-phosphocholine + H2O = a 1-acyl-sn-glycero-3-phosphocholine + a fatty acid + H(+). Its function is as follows. Snake venom phospholipase A2 (PLA2) that inhibits collagen-induced platelet aggregation. PLA2 catalyzes the calcium-dependent hydrolysis of the 2-acyl groups in 3-sn-phosphoglycerides. The sequence is that of Acidic phospholipase A2 S17-58 from Austrelaps superbus (Lowland copperhead snake).